The following is a 419-amino-acid chain: Oligouridylate-binding protein 1B (419 aa).

2 consecutive RRM domains span residues 54 to 128 and 139 to 217; these read RSVY…WAYA and FNIF…WATK. The interval 217-257 is disordered; the sequence is KGATSGEDKQSSDSKSVVELTSGVSEDGKDTTNGEAPENNA. Serine 241 is modified (phosphoserine). The RRM 3 domain maps to 260-335; it reads TTVYVGNLAP…RQMKCSWGSK (76 aa).

Interacts with UBA1A and UBA2A.

The protein resides in the nucleus. Functionally, heterogeneous nuclear ribonucleoprotein (hnRNP)-like protein that acts as a component of the pre-mRNA processing machinery. Functions to facilitate the nuclear maturation of plant pre-mRNAs. This is Oligouridylate-binding protein 1B (UBP1B) from Arabidopsis thaliana (Mouse-ear cress).